The primary structure comprises 266 residues: 3-methyl-2-oxobutanoate hydroxymethyltransferase (266 aa).

Aspartate 45 and aspartate 84 together coordinate Mg(2+). 3-methyl-2-oxobutanoate contacts are provided by residues 45–46, aspartate 84, and lysine 113; that span reads DS. Glutamate 115 serves as a coordination point for Mg(2+). Residue glutamate 183 is the Proton acceptor of the active site.

The protein belongs to the PanB family. Homodecamer; pentamer of dimers. Mg(2+) is required as a cofactor.

It localises to the cytoplasm. It carries out the reaction 3-methyl-2-oxobutanoate + (6R)-5,10-methylene-5,6,7,8-tetrahydrofolate + H2O = 2-dehydropantoate + (6S)-5,6,7,8-tetrahydrofolate. It functions in the pathway cofactor biosynthesis; (R)-pantothenate biosynthesis; (R)-pantoate from 3-methyl-2-oxobutanoate: step 1/2. In terms of biological role, catalyzes the reversible reaction in which hydroxymethyl group from 5,10-methylenetetrahydrofolate is transferred onto alpha-ketoisovalerate to form ketopantoate. This Coxiella burnetii (strain Dugway 5J108-111) protein is 3-methyl-2-oxobutanoate hydroxymethyltransferase.